Consider the following 239-residue polypeptide: U2 small nuclear ribonucleoprotein A' (239 aa).

LRR repeat units follow at residues 19-40, 42-63, 64-85, and 88-109; these read KETE…GVLR, VHDA…PRMK, RLQT…IGKV, and NLKT…DPLA. The LRRCT domain occupies 122–160; it reads NPVAQKQYYRLYLIWRIPSLHILDFERVRRNERLRAEEV.

This sequence belongs to the U2 small nuclear ribonucleoprotein A family. In terms of assembly, belongs to the 40S cdc5-associated complex (or cwf complex), a spliceosome sub-complex reminiscent of a late-stage spliceosome composed of the U2, U5 and U6 snRNAs and at least brr2, cdc5, cwf2/prp3, cwf3/syf1, cwf4/syf3, cwf5/ecm2, spp42/cwf6, cwf7/spf27, cwf8, cwf9, cwf10, cwf11, cwf12, prp45/cwf13, cwf14, cwf15, cwf16, cwf17, cwf18, cwf19, cwf20, cwf21, cwf22, cwf23, cwf24, cwf25, cwf26, cyp7/cwf27, cwf28, cwf29/ist3, lea1, msl1, prp5/cwf1, prp10, prp12/sap130, prp17, prp22, sap61, sap62, sap114, sap145, slu7, smb1, smd1, smd3, smf1, smg1 and syf2.

It localises to the nucleus. In terms of biological role, involved in pre-mRNA splicing. This protein is associated with sn-RNP U2. It helps the A' protein to bind stem loop IV of U2 snRNA. The chain is U2 small nuclear ribonucleoprotein A' (lea1) from Schizosaccharomyces pombe (strain 972 / ATCC 24843) (Fission yeast).